We begin with the raw amino-acid sequence, 505 residues long: MLKVIPWLLVTSSLVAIPTYIHATTEVVVNLNVKHSVEGKSEFERKNHIKLHSTLNDNDWQGEEDKLKYMMEELDVYFGRDNGGTVWNFNQAIEDPANIGYADPQNIIARGQAQRETNWGQNKSALHQYDGRGDLMIGGQPRAHYLGNTSPCCGGSAWQAKGGDAVGDFLGQYVNEFFRSAGDPVTKGHLAPVYFEVLNEPLYQVTDAPHELGLEQPIPPIDIFTFHNDVADAFRQHNTHIKIGGFTVAFPIFEQREFARWEERMKLFIDTSGSHMDVYSTHFYDLEDDNRFKGSRLEATLDMIDQYSLLALGETKPHVISEYGGRNRPMENAPWSALRDWWFLKTASPMLMQFLSRPDSVLTSIPFVPIKALWGTAADGTPYNWRLLRQQKEAPNETGENWVFTEMVKFYQLWSDVKGTRVDTFSTNSDFLIDSYVQNDKAYVLISNLTEQAEKIVVHKYGAPASSQPTTRIKHLYLKGAAPRLMKQVMRQISKKSRLLLKRLW.

Residues M1–A23 form the signal peptide. E200 (proton donor) is an active-site residue. The active-site Nucleophile is E322.

It belongs to the glycosyl hydrolase 86 family.

It is found in the secreted. The catalysed reaction is Hydrolysis of (1-&gt;4)-beta-D-galactosidic linkages in agarose, giving the tetramer as the predominant product.. In terms of biological role, hydrolase that cleaves agar at the (1-&gt;4) linkage, producing tetrameric saccharide molecules. Is specific for agar and agarose and does not digest alginate or carrageenan. This Pseudoalteromonas atlantica (Alteromonas atlantica) protein is Beta-agarase.